The primary structure comprises 330 residues: Ferredoxin--NADP reductase (330 aa).

Residues glutamate 35, glutamine 43, tyrosine 48, valine 90, phenylalanine 123, aspartate 285, and threonine 326 each contribute to the FAD site.

Belongs to the ferredoxin--NADP reductase type 2 family. In terms of assembly, homodimer. Requires FAD as cofactor.

It carries out the reaction 2 reduced [2Fe-2S]-[ferredoxin] + NADP(+) + H(+) = 2 oxidized [2Fe-2S]-[ferredoxin] + NADPH. The polypeptide is Ferredoxin--NADP reductase (Streptococcus pyogenes serotype M1).